The sequence spans 178 residues: Putative RING-H2 finger protein ATL19 (178 aa).

The chain crosses the membrane as a helical span at residues 11–31 (LISVLGLAVFIGLCILLVVLI). The RING-type; atypical zinc finger occupies 130–172 (CAICLSGYVVNEECRVFPVCRHIYHALCIDAWLKNHLTCPTCR).

The protein belongs to the RING-type zinc finger family. ATL subfamily.

The protein resides in the membrane. It carries out the reaction S-ubiquitinyl-[E2 ubiquitin-conjugating enzyme]-L-cysteine + [acceptor protein]-L-lysine = [E2 ubiquitin-conjugating enzyme]-L-cysteine + N(6)-ubiquitinyl-[acceptor protein]-L-lysine.. Its pathway is protein modification; protein ubiquitination. The chain is Putative RING-H2 finger protein ATL19 (ATL19) from Arabidopsis thaliana (Mouse-ear cress).